The following is a 156-amino-acid chain: 6,7-dimethyl-8-ribityllumazine synthase (156 aa).

5-amino-6-(D-ribitylamino)uracil-binding positions include phenylalanine 23, 57-59 (AFE), and 81-83 (AII). 86–87 (ST) is a binding site for (2S)-2-hydroxy-3-oxobutyl phosphate. The active-site Proton donor is the histidine 89. A 5-amino-6-(D-ribitylamino)uracil-binding site is contributed by phenylalanine 114. (2S)-2-hydroxy-3-oxobutyl phosphate is bound at residue arginine 128.

This sequence belongs to the DMRL synthase family.

It carries out the reaction (2S)-2-hydroxy-3-oxobutyl phosphate + 5-amino-6-(D-ribitylamino)uracil = 6,7-dimethyl-8-(1-D-ribityl)lumazine + phosphate + 2 H2O + H(+). Its pathway is cofactor biosynthesis; riboflavin biosynthesis; riboflavin from 2-hydroxy-3-oxobutyl phosphate and 5-amino-6-(D-ribitylamino)uracil: step 1/2. Functionally, catalyzes the formation of 6,7-dimethyl-8-ribityllumazine by condensation of 5-amino-6-(D-ribitylamino)uracil with 3,4-dihydroxy-2-butanone 4-phosphate. This is the penultimate step in the biosynthesis of riboflavin. This chain is 6,7-dimethyl-8-ribityllumazine synthase, found in Wolinella succinogenes (strain ATCC 29543 / DSM 1740 / CCUG 13145 / JCM 31913 / LMG 7466 / NCTC 11488 / FDC 602W) (Vibrio succinogenes).